The primary structure comprises 561 residues: Dihydroxy-acid dehydratase (561 aa).

Residue Cys50 coordinates [2Fe-2S] cluster. Residue Asp82 participates in Mg(2+) binding. Cys123 serves as a coordination point for [2Fe-2S] cluster. Mg(2+) contacts are provided by Asp124 and Lys125. Lys125 carries the post-translational modification N6-carboxylysine. Cys195 lines the [2Fe-2S] cluster pocket. Residue Glu447 participates in Mg(2+) binding. Residue Ser473 is the Proton acceptor of the active site.

This sequence belongs to the IlvD/Edd family. As to quaternary structure, homodimer. [2Fe-2S] cluster serves as cofactor. It depends on Mg(2+) as a cofactor.

The enzyme catalyses (2R)-2,3-dihydroxy-3-methylbutanoate = 3-methyl-2-oxobutanoate + H2O. It carries out the reaction (2R,3R)-2,3-dihydroxy-3-methylpentanoate = (S)-3-methyl-2-oxopentanoate + H2O. Its pathway is amino-acid biosynthesis; L-isoleucine biosynthesis; L-isoleucine from 2-oxobutanoate: step 3/4. It functions in the pathway amino-acid biosynthesis; L-valine biosynthesis; L-valine from pyruvate: step 3/4. Functionally, functions in the biosynthesis of branched-chain amino acids. Catalyzes the dehydration of (2R,3R)-2,3-dihydroxy-3-methylpentanoate (2,3-dihydroxy-3-methylvalerate) into 2-oxo-3-methylpentanoate (2-oxo-3-methylvalerate) and of (2R)-2,3-dihydroxy-3-methylbutanoate (2,3-dihydroxyisovalerate) into 2-oxo-3-methylbutanoate (2-oxoisovalerate), the penultimate precursor to L-isoleucine and L-valine, respectively. The sequence is that of Dihydroxy-acid dehydratase from Acaryochloris marina (strain MBIC 11017).